The primary structure comprises 346 residues: Phosphoribosylformylglycinamidine cyclo-ligase (346 aa).

This sequence belongs to the AIR synthase family.

The protein localises to the cytoplasm. It carries out the reaction 2-formamido-N(1)-(5-O-phospho-beta-D-ribosyl)acetamidine + ATP = 5-amino-1-(5-phospho-beta-D-ribosyl)imidazole + ADP + phosphate + H(+). It functions in the pathway purine metabolism; IMP biosynthesis via de novo pathway; 5-amino-1-(5-phospho-D-ribosyl)imidazole from N(2)-formyl-N(1)-(5-phospho-D-ribosyl)glycinamide: step 2/2. This chain is Phosphoribosylformylglycinamidine cyclo-ligase, found in Bacillus licheniformis (strain ATCC 14580 / DSM 13 / JCM 2505 / CCUG 7422 / NBRC 12200 / NCIMB 9375 / NCTC 10341 / NRRL NRS-1264 / Gibson 46).